Reading from the N-terminus, the 564-residue chain is Mercuric reductase (564 aa).

An HMA domain is found at 1–65; that stretch reads MSTLKITGMT…AVAGLGYRAT (65 aa). A metal cation-binding residues include Cys11 and Cys14. FAD-binding residues include Ala109, Gly129, and Thr134. Cys135 and Cys140 are disulfide-bonded. FAD contacts are provided by Lys144, Ala210, Asp406, and Val414. Hg(2+) is bound by residues Cys561 and Cys562.

Belongs to the class-I pyridine nucleotide-disulfide oxidoreductase family. Homodimer. FAD serves as cofactor.

It carries out the reaction Hg + NADP(+) + H(+) = Hg(2+) + NADPH. Its function is as follows. Resistance to Hg(2+) in bacteria appears to be governed by a specialized system which includes mercuric reductase. MerA protein is responsible for volatilizing mercury as Hg(0). In Shigella flexneri, this protein is Mercuric reductase (merA).